A 118-amino-acid polypeptide reads, in one-letter code: Large ribosomal subunit protein bL20 (118 aa).

Belongs to the bacterial ribosomal protein bL20 family.

In terms of biological role, binds directly to 23S ribosomal RNA and is necessary for the in vitro assembly process of the 50S ribosomal subunit. It is not involved in the protein synthesizing functions of that subunit. The chain is Large ribosomal subunit protein bL20 from Psychrobacter arcticus (strain DSM 17307 / VKM B-2377 / 273-4).